A 257-amino-acid chain; its full sequence is MLRAAWRALSSVRVQAVTQAPVPALRARSSASLPSARCGLQTPSLLNAARAYAVQKPVQAKQDDEPASSTFIKEYKNIIPNMEKVDDVVKRILSLEMASRKEKLKIKREQLMNKIAENPEDYRTLEARIVALTVKIRNYEEHMQKHRKDKVHKRHLLMSIDQRKKFLRLLRQTNYDVFEKTCKELGVEYALPPLHFQRVHRRFLAKKALCIQVFQEVQKLKKQRMALKAAAAAAKKEKRERVPENPSNALPEKTKEN.

The N-terminal 57 residues, 1–57, are a transit peptide targeting the mitochondrion; the sequence is MLRAAWRALSSVRVQAVTQAPVPALRARSSASLPSARCGLQTPSLLNAARAYAVQKP. The tract at residues 228–257 is disordered; it reads KAAAAAAKKEKRERVPENPSNALPEKTKEN. Positions 234–243 are enriched in basic and acidic residues; sequence AKKEKRERVP.

This sequence belongs to the universal ribosomal protein uS15 family. Component of the mitochondrial ribosome small subunit (28S) which comprises a 12S rRNA and about 30 distinct proteins. Interacts with METTL17.

The protein localises to the mitochondrion matrix. This Rattus norvegicus (Rat) protein is Small ribosomal subunit protein uS15m (Mrps15).